The chain runs to 361 residues: Phospho-N-acetylmuramoyl-pentapeptide-transferase (361 aa).

10 helical membrane passes run 28–48, 74–94, 99–119, 133–153, 168–188, 203–223, 236–256, 263–283, 288–308, and 338–358; these read LAIIITLSLSFITGPILIKFL, TMGGIMIILSSCLSTLLLADL, IWITLFGFISFGIIGFMDDYA, SKLLLQGIISFIICVLLEYLD, LSLDLGYFYIVFAMFVIVGSS, VPIAFTAGSFALISYLVGNLI, TGELTVLCAGLVGSCLGFLWF, VFMGDTGSLSLGGVLGIISVI, IVLAIVGGLFVIETTSVILQV, and KVVIRFWIISVIFALIGLSSL.

This sequence belongs to the glycosyltransferase 4 family. MraY subfamily. The cofactor is Mg(2+).

It localises to the cell membrane. It carries out the reaction UDP-N-acetyl-alpha-D-muramoyl-L-alanyl-gamma-D-glutamyl-meso-2,6-diaminopimeloyl-D-alanyl-D-alanine + di-trans,octa-cis-undecaprenyl phosphate = di-trans,octa-cis-undecaprenyl diphospho-N-acetyl-alpha-D-muramoyl-L-alanyl-D-glutamyl-meso-2,6-diaminopimeloyl-D-alanyl-D-alanine + UMP. Its pathway is cell wall biogenesis; peptidoglycan biosynthesis. In terms of biological role, catalyzes the initial step of the lipid cycle reactions in the biosynthesis of the cell wall peptidoglycan: transfers peptidoglycan precursor phospho-MurNAc-pentapeptide from UDP-MurNAc-pentapeptide onto the lipid carrier undecaprenyl phosphate, yielding undecaprenyl-pyrophosphoryl-MurNAc-pentapeptide, known as lipid I. The chain is Phospho-N-acetylmuramoyl-pentapeptide-transferase from Rickettsia montanensis.